Reading from the N-terminus, the 187-residue chain is Phosphatidylethanolamine-binding protein 1 (187 aa).

Residues serine 6 and serine 13 each carry the phosphoserine modification. Position 42 is a phosphothreonine (threonine 42). A phosphoserine mark is found at serine 52, serine 54, serine 98, and serine 153. The segment at 93–134 (KGNDISSGTVLSDYVGSGPPKGTGLHRYVWLVYEQARPLKCD) is interaction with RAF1.

It belongs to the phosphatidylethanolamine-binding protein family. Has a tendency to form dimers by disulfide cross-linking. Interacts with RAF1 and this interaction is enhanced if RAF1 is phosphorylated on residues 'Ser-338', 'Ser-339', 'Tyr-340' and 'Tyr-341'. Interacts with ALOX15; in response to IL13/interleukin-13, prevents the interaction of PEBP1 with RAF1 to activate the ERK signaling cascade.

Its subcellular location is the cytoplasm. In terms of biological role, binds ATP, opioids and phosphatidylethanolamine. Has lower affinity for phosphatidylinositol and phosphatidylcholine. Serine protease inhibitor which inhibits thrombin, neuropsin and chymotrypsin but not trypsin, tissue type plasminogen activator and elastase. Inhibits the kinase activity of RAF1 by inhibiting its activation and by dissociating the RAF1/MEK complex and acting as a competitive inhibitor of MEK phosphorylation. HCNP may be involved in the function of the presynaptic cholinergic neurons of the central nervous system. HCNP increases the production of choline acetyltransferase but not acetylcholinesterase. Seems to be mediated by a specific receptor. This chain is Phosphatidylethanolamine-binding protein 1 (PEBP1), found in Macaca fascicularis (Crab-eating macaque).